An 815-amino-acid chain; its full sequence is RNA-binding protein 5 (815 aa).

The tract at residues 1 to 93 (MGSDKRVSRT…EHDYRHDISD (93 aa)) is disordered. A phosphoserine mark is found at S18, S59, S69, S72, and S78. In terms of domain architecture, RRM 1 spans 98–178 (KTIMLRGLPI…KHIAMHYSNP (81 aa)). The RanBP2-type zinc finger occupies 181–210 (KFEDWLCNKCCLNNFRKRLKCFRCGADKFD). The RRM 2 domain occupies 231–315 (DTIILRNIAP…KTIGVDFAKS (85 aa)). A required for interaction with U2AF2 region spans residues 321–809 (VLPDGNRVSA…KDAVRKAMFA (489 aa)). Disordered regions lie at residues 407-468 (AVVS…DESS) and 508-540 (AAES…AQQI). The segment covering 411-422 (QSPQLYNQTSNP) has biased composition (polar residues). The segment covering 426-446 (PTEEAQPSTSTSTQAPAASPT) has biased composition (low complexity). A Phosphoserine modification is found at S444. A sufficient for interaction with ACIN1, PRPF8, SFRS3, SNRPB, SNRPN, SNRNP70 and SNRNP200 region spans residues 452–535 (TKYAVPDTST…KEKKEKPKSK (84 aa)). Over residues 510–519 (ESSSNQQAGL) the composition is skewed to polar residues. Residues S621 and S624 each carry the phosphoserine modification. A C2H2-type zinc finger spans residues 647–672 (MACLLCRRQFPNRDALVRHQQLSDLH). Residues 743–789 (HSNIGNKMLQAMGWREGSGLGRKCQGITAPIEAQVRLKGAGLGAKGS) enclose the G-patch domain.

The protein belongs to the RBM5/RBM10 family. As to quaternary structure, component of the spliceosome A complex (also known as the prespliceosome). Appears to dissociate from the spliceosome upon formation of the spliceosome B complex (also known as the precatalytic spliceosome), in which the heterotrimeric U4/U6.U5 snRNPs are bound. Interacts with U2AF2; this interaction is direct. Also interacts with ACIN1, PRPF8, SFRS3, SNRPB, SNRPN, SNRNP70 and SNRNP200; these interactions may be indirect.

It is found in the nucleus. Functionally, component of the spliceosome A complex. Binds to ssRNA containing the consensus sequence 5'-AGGUAA-3'. Regulates alternative splicing of a number of mRNAs. May modulate splice site pairing after recruitment of the U1 and U2 snRNPs to the 5' and 3' splice sites of the intron. May both positively and negatively regulate apoptosis by regulating the alternative splicing of several genes involved in this process, including FAS and CASP2/caspase-2. In the case of FAS, promotes production of a soluble form of FAS that inhibits apoptosis. In the case of CASP2/caspase-2, promotes production of a catalytically active form of CASP2/Caspase-2 that induces apoptosis. In Rattus norvegicus (Rat), this protein is RNA-binding protein 5 (Rbm5).